Reading from the N-terminus, the 670-residue chain is MLSKLFVFLLICYATADEVDKKEAKHGFQLFHWNWDHIHKVYVITTWLLVASLAKILFNLMKPLSKWLPDSSLLIIVGLGLGYFLNQTTLSGVHLDSHAFFLYLLPPIIFDAGYFMPNRALFKNFDSVLVFSVLGTLWNTFAIGGSLLIMSKYQLFTMPFTTFEILVFSALISAVDPVAVIAIFEEIHVNEFLFINVFGEALFNDGVTVVLYQMFKSFALIGSENLSPWDYATGGLSFFVVALGGAAIGIIFAIATSLATKYTQGIKILAPVFIFLLPYMAYLTAEMVSLSSIIAIAVCGMLMKQYIKGNITEAATNSVKYFTKMLAQCSETVIFMFLGLSTLTSEHHVDFIFIGATLVFCLIYRAIGIIVQCFILNKFRAKKFEVVDQFILSYGGLRGAIAYGLVVSIPASIQAKPMFITTTICVIYFTVFLQGITIRPLVNCLNVKKKEHREATMVESVYNKYLDYMMSGVEDIAGQRGHYSFIENFERFNAKVIKPVLMRHEKRQSFDATSIIRAYEKITLEDAIKLTKVKSTLQNKRLEKVKSEVRVAPEQTTVTPKDVQLARFMQSGENIDQLYTLFSDLLDKKLNELKVQADKVDKANDDDIQDDYMAEMGSHSNLGFMHHSADQLDSDSVFQRRGRRLSTGDLKGHCGTSRKPKHSMFELRHV.

Helical transmembrane passes span 41–61 (VYVI…FNLM), 73–93 (LLII…LSGV), 97–117 (SHAF…YFMP), 129–149 (LVFS…SLLI), 164–184 (EILV…IAIF), 192–212 (FLFI…VVLY), 235–255 (GLSF…FAIA), and 268–288 (ILAP…AEMV). N310 is a glycosylation site (N-linked (GlcNAc...) asparagine). Helical transmembrane passes span 325 to 345 (MLAQ…TLTS), 351 to 371 (FIFI…GIIV), 390 to 410 (FILS…VSIP), and 418 to 438 (MFIT…GITI). The tract at residues 648–670 (GDLKGHCGTSRKPKHSMFELRHV) is disordered.

The protein belongs to the monovalent cation:proton antiporter 1 (CPA1) transporter (TC 2.A.36) family. Post-translationally, phosphorylated. As to expression, expressed in hypodermal cells of the main body syncytium, ut1 cells of the vulva and the spermathecal junction cell.

The protein localises to the endomembrane system. In terms of biological role, plays a role in epithelial membrane transport processes. The chain is Probable Na(+)/H(+) antiporter nhx-3 (nhx-3) from Caenorhabditis elegans.